We begin with the raw amino-acid sequence, 267 residues long: MTLFHLILVAAIQGLTEFLPVSSSGHLVLLPALTGQPDQGLAIDVAVHVGSLLAVILYFWSDVRIAATGSLRLARGKVDTQGAFLALCLIIATIPVMIAGLIIKLTGLDEMMRSVAVIGWTMLGFGLVLYWADRTGASTRTASGWTLKDAFLMGLAQILSLIPGTSRSGITITAARRLGYEREGAAKLAMLMSIPTIIASGAVLGADVIGEADWQMARDGALAAALAFVSALLALALMMRLLKSVSFTPYVVYRVILGLILLVYAYS.

A run of 8 helical transmembrane segments spans residues 1 to 21 (MTLF…FLPV), 40 to 60 (GLAI…LYFW), 83 to 103 (AFLA…GLII), 111 to 131 (MMRS…VLYW), 144 to 164 (GWTL…LIPG), 189 to 209 (AMLM…ADVI), 219 to 239 (DGAL…ALMM), and 245 to 265 (VSFT…LVYA).

It belongs to the UppP family.

Its subcellular location is the cell inner membrane. It catalyses the reaction di-trans,octa-cis-undecaprenyl diphosphate + H2O = di-trans,octa-cis-undecaprenyl phosphate + phosphate + H(+). Functionally, catalyzes the dephosphorylation of undecaprenyl diphosphate (UPP). Confers resistance to bacitracin. This chain is Undecaprenyl-diphosphatase, found in Roseobacter denitrificans (strain ATCC 33942 / OCh 114) (Erythrobacter sp. (strain OCh 114)).